Reading from the N-terminus, the 61-residue chain is Photosystem II reaction center protein K (61 aa).

Residues 1–24 (MLNIFSLMYICLNSALYSSSFLFA) constitute a propeptide that is removed on maturation. The chain crosses the membrane as a helical span at residues 40–60 (MPVIPVLFFLLAFVWQAAVSF).

This sequence belongs to the PsbK family. PSII is composed of 1 copy each of membrane proteins PsbA, PsbB, PsbC, PsbD, PsbE, PsbF, PsbH, PsbI, PsbJ, PsbK, PsbL, PsbM, PsbT, PsbX, PsbY, PsbZ, Psb30/Ycf12, at least 3 peripheral proteins of the oxygen-evolving complex and a large number of cofactors. It forms dimeric complexes.

Its subcellular location is the plastid. It is found in the chloroplast thylakoid membrane. In terms of biological role, one of the components of the core complex of photosystem II (PSII). PSII is a light-driven water:plastoquinone oxidoreductase that uses light energy to abstract electrons from H(2)O, generating O(2) and a proton gradient subsequently used for ATP formation. It consists of a core antenna complex that captures photons, and an electron transfer chain that converts photonic excitation into a charge separation. The polypeptide is Photosystem II reaction center protein K (Citrus sinensis (Sweet orange)).